A 99-amino-acid chain; its full sequence is uncharacterized protein (99 aa).

An N-terminal signal peptide occupies residues 1–17 (MMMNAFFPAMALMVLVG). Cys-18 carries N-palmitoyl cysteine lipidation. Cys-18 carries S-diacylglycerol cysteine lipidation.

Its subcellular location is the cell membrane. This is an uncharacterized protein from Shigella boydii serotype 4 (strain Sb227).